A 383-amino-acid polypeptide reads, in one-letter code: Outer membrane protein S2 (383 aa).

Positions 1–21 are cleaved as a signal peptide; the sequence is MKRKVLALVIPALLAAGAAHA.

The protein belongs to the Gram-negative porin family. In terms of assembly, homotrimer.

It localises to the cell outer membrane. In terms of biological role, forms pores that allow passive diffusion of small molecules across the outer membrane. The chain is Outer membrane protein S2 (ompS2) from Salmonella typhi.